Consider the following 504-residue polypeptide: L-carnitine/gamma-butyrobetaine antiporter (504 aa).

Transmembrane regions (helical) follow at residues 10 to 30 (IEPK…WLTV), 51 to 71 (WGWA…WLVF), 92 to 112 (IFMM…SIEI), 143 to 163 (GPLP…FFFV), 195 to 215 (FYLV…TPLV), 231 to 251 (LDAI…ACGL), 263 to 283 (SYLS…SFIM), 316 to 336 (WTVF…IFLA), 347 to 367 (LCFG…TVLG), 398 to 418 (WAAL…CFIA), 446 to 466 (LLVR…LLAL), and 475 to 495 (AIIA…LSFI).

Belongs to the BCCT transporter (TC 2.A.15) family. CaiT subfamily. Homotrimer.

The protein resides in the cell inner membrane. It catalyses the reaction 4-(trimethylamino)butanoate(in) + (R)-carnitine(out) = 4-(trimethylamino)butanoate(out) + (R)-carnitine(in). Its pathway is amine and polyamine metabolism; carnitine metabolism. Functionally, catalyzes the exchange of L-carnitine for gamma-butyrobetaine. This chain is L-carnitine/gamma-butyrobetaine antiporter, found in Escherichia coli O8 (strain IAI1).